We begin with the raw amino-acid sequence, 430 residues long: Protein POLLENLESS 3-LIKE 2 (430 aa).

The tract at residues methionine 1–glycine 21 is disordered. TPR repeat units lie at residues aspartate 40–valine 73, aspartate 74–glutamine 107, glutamate 110–glycine 143, threonine 170–asparagine 203, lysine 205–glycine 236, and arginine 238–leucine 257. The stretch at alanine 81–glutamine 107 forms a coiled coil. Positions lysine 346 to arginine 376 are disordered.

This sequence belongs to the MS5 protein family.

Its subcellular location is the nucleus. Probably involved in the regulation of cell division. The polypeptide is Protein POLLENLESS 3-LIKE 2 (Arabidopsis thaliana (Mouse-ear cress)).